Consider the following 253-residue polypeptide: Sulfoacetaldehyde reductase (253 aa).

6–30 contacts NADP(+); the sequence is FITGATSGFGRAAAHRFAAAGWSLV. Ser139 is a binding site for substrate. Tyr152 (proton acceptor) is an active-site residue.

It belongs to the short-chain dehydrogenases/reductases (SDR) family. As to quaternary structure, homodimer and heterotetramer.

It catalyses the reaction 2-hydroxyethane-1-sulfonate + NADP(+) = sulfoacetaldehyde + NADPH + H(+). It functions in the pathway organosulfur degradation. Catalyzes the formation of isethionate from 2-sulfoacetaldehyde in the deaminative pathway of taurine. The enzyme is specific for NADPH; NADH is not a substrate. Responsible for most of the activity observed in taurine-grown cells. The protein is Sulfoacetaldehyde reductase (isfD) of Chromohalobacter salexigens (strain ATCC BAA-138 / DSM 3043 / CIP 106854 / NCIMB 13768 / 1H11).